The following is a 599-amino-acid chain: Endo-1,4-beta-xylanase B (599 aa).

An N-terminal signal peptide occupies residues Met-1 to Ala-37. Residues Ala-38–Ala-136 form the CBM2 domain. Cys-39 and Cys-133 are joined by a disulfide. Positions Leu-163–Val-289 constitute a CBM6 domain. The 281-residue stretch at Ser-315 to Asn-595 folds into the GH10 domain. Glu-431 serves as the catalytic Proton donor. Glu-530 serves as the catalytic Nucleophile.

It belongs to the glycosyl hydrolase 10 (cellulase F) family.

It carries out the reaction Endohydrolysis of (1-&gt;4)-beta-D-xylosidic linkages in xylans.. It functions in the pathway glycan metabolism; hemicellulose degradation. Xylanase B contributes to hydrolyze hemicellulose, the major component of plant cell-walls. The protein is Endo-1,4-beta-xylanase B (xynB) of Cellvibrio japonicus (strain Ueda107) (Pseudomonas fluorescens subsp. cellulosa).